The sequence spans 194 residues: Ion-translocating oxidoreductase complex subunit A (194 aa).

Transmembrane regions (helical) follow at residues 5-25, 47-67, 72-92, 102-122, 135-155, and 172-192; these read VLILISAVLVNNFVLVQFLGL, FVLTLSSVLAYLTWAYILVPF, LRTISFILVIAVAVQFTEMFV, VLGVFLPLITSNCAVLGVALL, LTYGFGAAIGFSLVLILFAAM, and SIGLITAGLMSLAFMGFSGLI.

Belongs to the NqrDE/RnfAE family. As to quaternary structure, the complex is composed of six subunits: RnfA, RnfB, RnfC, RnfD, RnfE and RnfG.

Its subcellular location is the cell inner membrane. Its function is as follows. Part of a membrane-bound complex that couples electron transfer with translocation of ions across the membrane. This chain is Ion-translocating oxidoreductase complex subunit A, found in Alcanivorax borkumensis (strain ATCC 700651 / DSM 11573 / NCIMB 13689 / SK2).